Reading from the N-terminus, the 610-residue chain is MVRMDLSRIRNFSIIAHVDHGKSTLADRILELTHAVSDREMREQFLDSLELERERGITIKASAVRVRYRAKDGEEYVFHLIDTPGHVDFTYEVSRALAAVEGVLLVVDASQGVEAETLAKFYMALEHGHVIIPVINKIDLPNARPLEVALEVEEVLGLPADEAIFASGKTGEGVEEILEAIVQRIPPPKGDPEAPLKALIFDSVYDAYQGVIPYLRLFEGRVRPGDRIRIYSTGKEFTVDKVGVFTPQGLVATEALEAGEVGWLVAAIRDIHDVQVGDTLTLADRPTPSPYPGFRPAKPVVFAGLYPVDSGEYGKLRDALEKLKLNDAALTFEPESSTALGFGFRCGFLGLLHAEIVQERLEREFGLSLIATAPSVVYKVRLKSGEEVEVHNPADLPDPTRIEEILEPYVKLTIFTPEEYVGSLMQLLQEKRGRLVNMNYLPGAQKRVELVYEAPFAEILYDFHDRLKSVSRGYASMDYEQIGYRPGDLVKVNVLVHGEVVDALTFIAHREKAYTMARAIVDKLAEVIPRQLFEVPIQAAIGGKIIARATVKALRKDVLAKCYGGDVTRKKKLLEKQKEGKKRLKAIGKVEVPQEAFLAVLSAGRDEPKG.

One can recognise a tr-type G domain in the interval 7–189 (SRIRNFSIIA…AIVQRIPPPK (183 aa)). GTP contacts are provided by residues 19-24 (DHGKST) and 136-139 (NKID).

This sequence belongs to the TRAFAC class translation factor GTPase superfamily. Classic translation factor GTPase family. LepA subfamily.

It is found in the cell inner membrane. It catalyses the reaction GTP + H2O = GDP + phosphate + H(+). Required for accurate and efficient protein synthesis under certain stress conditions. May act as a fidelity factor of the translation reaction, by catalyzing a one-codon backward translocation of tRNAs on improperly translocated ribosomes. Back-translocation proceeds from a post-translocation (POST) complex to a pre-translocation (PRE) complex, thus giving elongation factor G a second chance to translocate the tRNAs correctly. Binds to ribosomes in a GTP-dependent manner. In Thermus thermophilus (strain ATCC BAA-163 / DSM 7039 / HB27), this protein is Elongation factor 4.